Reading from the N-terminus, the 203-residue chain is Peptide deformylase (203 aa).

Fe cation contacts are provided by C130 and H173. E174 is a catalytic residue. H177 lines the Fe cation pocket.

The protein belongs to the polypeptide deformylase family. Fe(2+) serves as cofactor.

The enzyme catalyses N-terminal N-formyl-L-methionyl-[peptide] + H2O = N-terminal L-methionyl-[peptide] + formate. In terms of biological role, removes the formyl group from the N-terminal Met of newly synthesized proteins. Requires at least a dipeptide for an efficient rate of reaction. N-terminal L-methionine is a prerequisite for activity but the enzyme has broad specificity at other positions. This chain is Peptide deformylase, found in Streptococcus pneumoniae serotype 2 (strain D39 / NCTC 7466).